A 522-amino-acid chain; its full sequence is Sugar transport protein MST2 (522 aa).

Over 1 to 24 (MAAATAADVAEDTASVYSGKLTLY) the chain is Cytoplasmic. The helical transmembrane segment at 25–45 (VFLTCGVAATGGLIIGYDIGI) threads the bilayer. Over 46–82 (SGGVTSMDTFLGKFFPSVLHQEQTAQGTSQYCKFNSQ) the chain is Extracellular. Residues 83-103 (PLTAFTSSLYLAALVASFFVA) form a helical membrane-spanning segment. Residues 104 to 111 (SFTRALGR) are Cytoplasmic-facing. Residues 112-132 (KWSMFGGGVSFLAGATLNGAA) form a helical membrane-spanning segment. Over 133–134 (RN) the chain is Extracellular. Residues 135–155 (VAMLIVGRILLGIGVAFCGLS) form a helical membrane-spanning segment. At 156–169 (TPIYLSEMAPPRLR) the chain is on the cytoplasmic side. Residues 170–190 (GMLNIGLQLMITVGIFSANLV) traverse the membrane as a helical segment. Topologically, residues 191-204 (NYGAAKIRGGWGWR) are extracellular. The helical transmembrane segment at 205–225 (VSLGLAAAPACVIAVGSLFLP) threads the bilayer. Residues 226-291 (DSPSSLINRG…DVLQRRYRPQ (66 aa)) are Cytoplasmic-facing. The helical transmembrane segment at 292-312 (LAMAVLIPFFQQLTGINVIMF) threads the bilayer. Residues 313 to 329 (YAPVLFKTIGLGGDASL) are Extracellular-facing. A helical membrane pass occupies residues 330-350 (MSAVITGLVNIVATFVSIATV). Over 351 to 361 (DSLGRRKLLFQ) the chain is Cytoplasmic. Residues 362–382 (GGCQMLVSQVIIGTLIGVVFG) form a helical membrane-spanning segment. The Extracellular segment spans residues 383–391 (TSGDGNISR). Residues 392–412 (ALAVCIVVFICVYVAGFAWSW) form a helical membrane-spanning segment. Over 413–434 (GPLGVLLPSEIFPLEVRPAGQS) the chain is Cytoplasmic. The helical transmembrane segment at 435–455 (ISVAVNMLCTFAVAEAFLPML) threads the bilayer. The Extracellular portion of the chain corresponds to 456–459 (CHMR). The chain crosses the membrane as a helical span at residues 460-480 (FGLFYFFSGWVLVMTLFVSAF). The Cytoplasmic portion of the chain corresponds to 481–522 (LPETKGVPIEKMTVVWRTHWFWGRFYCNQDADAHVQVANSKV).

This sequence belongs to the major facilitator superfamily. Sugar transporter (TC 2.A.1.1) family.

The protein resides in the membrane. In terms of biological role, mediates active uptake of hexoses by sugar:proton symport. Can transport glucose. This is Sugar transport protein MST2 from Oryza sativa subsp. japonica (Rice).